The primary structure comprises 837 residues: Outer membrane usher protein HifC (837 aa).

The N-terminal stretch at 1-26 is a signal peptide; sequence MKTKNFPLNKIAFACTLLLANPVAWA. A disulfide bridge connects residues cysteine 813 and cysteine 833.

It belongs to the fimbrial export usher family.

The protein localises to the cell outer membrane. Functionally, essential for piliation. The polypeptide is Outer membrane usher protein HifC (hifC) (Haemophilus influenzae).